Reading from the N-terminus, the 593-residue chain is Tyrosine-protein phosphatase non-receptor type 11 (593 aa).

Threonine 2 bears the N-acetylthreonine mark. SH2 domains follow at residues tryptophan 6–leucine 102 and tryptophan 112–leucine 216. Phosphotyrosine is present on residues tyrosine 62 and tyrosine 66. The Tyrosine-protein phosphatase domain occupies phenylalanine 247–tyrosine 521. Residues aspartate 425, cysteine 459–arginine 465, and glutamine 506 each bind substrate. The Phosphocysteine intermediate role is filled by cysteine 459. Residues tyrosine 542 and tyrosine 580 each carry the phosphotyrosine; by PDGFR modification.

This sequence belongs to the protein-tyrosine phosphatase family. Non-receptor class 2 subfamily. As to quaternary structure, interacts with CD84 and with phosphorylated SIT1 and MZPL1. Interacts with FCRL4, FCRL6 and ANKHD1. Interacts with GAREM1 (tyrosine phosphorylated); the interaction increases MAPK/ERK activity and does not affect the GRB2/SOS complex formation. Interacts with PTPNS1 and BCAR3. Interacts with phosphorylated LIME1. Interacts with SHB and INPP5D/SHIP1. Interacts with KIR2DL1; the interaction is enhanced by ARRB2. Interacts with GAB2. Interacts with TERT; the interaction retains TERT in the nucleus. Interacts with PECAM1 and FER. Interacts with EPHA2 (activated); participates in PTK2/FAK1 dephosphorylation in EPHA2 downstream signaling. Interacts with MILR1 (tyrosine phosphorylated). Interacts with FLT1 (tyrosine-phosphorylated), FLT3 (tyrosine-phosphorylated), FLT4 (tyrosine-phosphorylated), KIT and GRB2. Interacts with ROS1; mediates PTPN11 phosphorylation. Interacts with PDGFRA (tyrosine phosphorylated). Interacts with PDGFRB (tyrosine phosphorylated); this interaction increases the PTPN11 phosphatase activity. Interacts (via SH2 domain) with TEK/TIE2 (tyrosine phosphorylated). Interacts with CEACAM1 (via cytoplasmic domain); this interaction depends on the monomer/dimer equilibrium and is phosphorylation-dependent. Interacts with MPIG6B (via ITIM motif). Interacts with SIGLEC10. Interacts with Lilrb4a (when tyrosine phosphorylated). Interacts with SIGLEC10. Interacts with CLEC12B (via ITIM motif); this interaction triggers dephosphorylation and activation of PTPN11. Interacts (via SH2 domains) with NEDD9/CAS-L; the interaction is enhanced when NEDD9/CAS-L is tyrosine phosphorylated. Interacts with PIRB; when PIRB is phosphorylated by LYN at 'Tyr-794' and 'Tyr-824'. Phosphorylated on Tyr-542 and Tyr-580 upon receptor protein tyrosine kinase activation; which creates a binding site for GRB2 and other SH2-containing proteins. Phosphorylated upon activation of the receptor-type kinase FLT3. Phosphorylated by activated PDGFRB. Phosphorylated upon activation of the receptor-type kinase PDGFRA. As to expression, highly expressed in brain, heart and kidney.

Its subcellular location is the cytoplasm. The catalysed reaction is O-phospho-L-tyrosyl-[protein] + H2O = L-tyrosyl-[protein] + phosphate. Its function is as follows. Acts downstream of various receptor and cytoplasmic protein tyrosine kinases to participate in the signal transduction from the cell surface to the nucleus. Positively regulates MAPK signal transduction pathway. Dephosphorylates GAB1, ARHGAP35 and EGFR. Dephosphorylates ROCK2 at 'Tyr-722' resulting in stimulation of its RhoA binding activity. Dephosphorylates CDC73. Dephosphorylates SOX9 on tyrosine residues, leading to inactivate SOX9 and promote ossification. Dephosphorylates tyrosine-phosphorylated NEDD9/CAS-L. This chain is Tyrosine-protein phosphatase non-receptor type 11 (Ptpn11), found in Mus musculus (Mouse).